The chain runs to 201 residues: Small ribosomal subunit protein uS4 (201 aa).

Residues 91 to 154 (TRLDNVVYRA…RKMEWFEEAQ (64 aa)) form the S4 RNA-binding domain.

Belongs to the universal ribosomal protein uS4 family. In terms of assembly, part of the 30S ribosomal subunit. Contacts protein S5. The interaction surface between S4 and S5 is involved in control of translational fidelity.

In terms of biological role, one of the primary rRNA binding proteins, it binds directly to 16S rRNA where it nucleates assembly of the body of the 30S subunit. Its function is as follows. With S5 and S12 plays an important role in translational accuracy. In Corynebacterium ammoniagenes (Brevibacterium ammoniagenes), this protein is Small ribosomal subunit protein uS4.